We begin with the raw amino-acid sequence, 216 residues long: MPGFIADPAEVPPFLLAGGRSSRMGVNKAFVSLGGEKLLTRIATRIGQRQTIPVALNADADWPDTEGLPLVPDTIPGKLGPLAGVLTAMRYTATHHPHASHLVTVPIDSPFFPIDLVAQLAEPIEGRNDIAIATSLGRDHPVFGLWPVSIADDLESWLLADEKRRVRDFLARHLVRTVDFPTIETAIGPLDPFFNINRPDDLIDAEKWLAALERTP.

Residues 16 to 18 (LAG), Lys28, Asn57, Asp73, and Asp108 each bind GTP. Asp108 contacts Mg(2+).

Belongs to the MobA family. Monomer. Requires Mg(2+) as cofactor.

The protein resides in the cytoplasm. It carries out the reaction Mo-molybdopterin + GTP + H(+) = Mo-molybdopterin guanine dinucleotide + diphosphate. Its function is as follows. Transfers a GMP moiety from GTP to Mo-molybdopterin (Mo-MPT) cofactor (Moco or molybdenum cofactor) to form Mo-molybdopterin guanine dinucleotide (Mo-MGD) cofactor. In Rhizobium rhizogenes (strain K84 / ATCC BAA-868) (Agrobacterium radiobacter), this protein is Molybdenum cofactor guanylyltransferase.